The sequence spans 347 residues: GMP reductase (347 aa).

Residue 108–131 (ADFQKTKDIMALTDDLIFICIDIA) coordinates NADP(+). Positions 181 and 183 each coordinate K(+). C186 acts as the Thioimidate intermediate in catalysis. 216 to 239 (IIGDGGCSCAGDVSKAFGGGADFV) is a binding site for NADP(+).

It belongs to the IMPDH/GMPR family. GuaC type 1 subfamily. In terms of assembly, homotetramer.

The catalysed reaction is IMP + NH4(+) + NADP(+) = GMP + NADPH + 2 H(+). In terms of biological role, catalyzes the irreversible NADPH-dependent deamination of GMP to IMP. It functions in the conversion of nucleobase, nucleoside and nucleotide derivatives of G to A nucleotides, and in maintaining the intracellular balance of A and G nucleotides. This chain is GMP reductase, found in Aliivibrio fischeri (strain MJ11) (Vibrio fischeri).